The primary structure comprises 290 residues: Membrane protein insertase YidC (290 aa).

A signal peptide spans 1–19 (MKKKALLPLFLGIMVFLAG). A lipid anchor (N-palmitoyl cysteine) is attached at Cys-20. Cys-20 is lipidated: S-diacylglycerol cysteine. 5 helical membrane-spanning segments follow: residues 56–76 (YGLA…PFML), 134–154 (MLGC…YFVL), 176–196 (PDIW…YVSS), 207–224 (GYMM…ISLS), and 229–251 (LGLY…NIYY). The disordered stretch occupies residues 270-290 (HNGGSNKKGKNTQVVSKKKKK).

The protein belongs to the OXA1/ALB3/YidC family. Type 2 subfamily.

The protein resides in the cell membrane. In terms of biological role, required for the insertion and/or proper folding and/or complex formation of integral membrane proteins into the membrane. Involved in integration of membrane proteins that insert both dependently and independently of the Sec translocase complex, as well as at least some lipoproteins. This chain is Membrane protein insertase YidC, found in Staphylococcus aureus (strain Mu3 / ATCC 700698).